The chain runs to 424 residues: CinA-like protein (424 aa).

The protein belongs to the CinA family.

This chain is CinA-like protein, found in Shewanella loihica (strain ATCC BAA-1088 / PV-4).